Consider the following 164-residue polypeptide: Peptidyl-prolyl cis-trans isomerase A-like 4A (164 aa).

One can recognise a PPIase cyclophilin-type domain in the interval 7–163 (FFDITVDGKP…KKITIADCGQ (157 aa)).

This sequence belongs to the cyclophilin-type PPIase family. PPIase A subfamily. In terms of tissue distribution, highly expressed in brain, ovary and mammary gland. Moderately expressed in lung, salivary gland, kidney, skin, adipose tissue, intestine and spleen. Weakly expressed in skeletal muscle, liver and stomach. Expressed in pleiomorphic and undifferentiated liposarcomas, osteosarcomas and breast carcinomas.

The protein resides in the cytoplasm. The enzyme catalyses [protein]-peptidylproline (omega=180) = [protein]-peptidylproline (omega=0). Functionally, PPIases accelerate the folding of proteins. It catalyzes the cis-trans isomerization of proline imidic peptide bonds in oligopeptides. This is Peptidyl-prolyl cis-trans isomerase A-like 4A from Homo sapiens (Human).